Here is a 1066-residue protein sequence, read N- to C-terminus: Elongation factor 3 (1066 aa).

HEAT repeat units follow at residues 112–149 (FIFE…VMSP), 151–188 (AAQQ…ACPE), 192–229 (ALMP…LISN), 231–268 (DIER…EVDS), 269–306 (ATLA…LVDN), and 312–353 (PFLG…VTGD). Thr-418 serves as a coordination point for ADP. ABC transporter domains lie at 454-672 (EEGE…YAEL) and 699-1015 (IKMK…KKEE). Positions 735, 944, 947, and 973 each coordinate ADP. Residues 997–1066 (GHDWTESNSK…YDSADELEDL (70 aa)) are disordered. A compositionally biased stretch (basic residues) spans 1042-1054 (RKAKKDRMARKKA).

This sequence belongs to the ABC transporter superfamily. ABCF family. EF3 subfamily.

It is found in the cytoplasm. The protein localises to the cytosol. The enzyme catalyses ATP + H2O = ADP + phosphate + H(+). It participates in protein biosynthesis; polypeptide chain elongation. Ribosome-dependent ATPase that functions in cytoplasmic translation elongation. Required for the ATP-dependent release of deacylated tRNA from the ribosomal E-site during protein biosynthesis. Stimulates the eEF1A-dependent binding of aminoacyl-tRNA to the ribosomal A-site, which has reduced affinity for tRNA as long as the E-site is occupied. Assists translation termination by stimulating the release of nascent protein from the ribosome by release factors. This chain is Elongation factor 3, found in Mycosarcoma maydis (Corn smut fungus).